The following is a 443-amino-acid chain: Thymidine phosphorylase (443 aa).

This sequence belongs to the thymidine/pyrimidine-nucleoside phosphorylase family. As to quaternary structure, homodimer.

The enzyme catalyses thymidine + phosphate = 2-deoxy-alpha-D-ribose 1-phosphate + thymine. It functions in the pathway pyrimidine metabolism; dTMP biosynthesis via salvage pathway; dTMP from thymine: step 1/2. In terms of biological role, the enzymes which catalyze the reversible phosphorolysis of pyrimidine nucleosides are involved in the degradation of these compounds and in their utilization as carbon and energy sources, or in the rescue of pyrimidine bases for nucleotide synthesis. This is Thymidine phosphorylase from Shewanella baltica (strain OS223).